A 505-amino-acid polypeptide reads, in one-letter code: ATP synthase subunit alpha, chloroplastic (505 aa).

170–177 (GDRQTGKT) provides a ligand contact to ATP.

This sequence belongs to the ATPase alpha/beta chains family. In terms of assembly, F-type ATPases have 2 components, CF(1) - the catalytic core - and CF(0) - the membrane proton channel. CF(1) has five subunits: alpha(3), beta(3), gamma(1), delta(1), epsilon(1). CF(0) has four main subunits: a, b, b' and c.

The protein localises to the plastid. Its subcellular location is the chloroplast thylakoid membrane. The enzyme catalyses ATP + H2O + 4 H(+)(in) = ADP + phosphate + 5 H(+)(out). In terms of biological role, produces ATP from ADP in the presence of a proton gradient across the membrane. The alpha chain is a regulatory subunit. The protein is ATP synthase subunit alpha, chloroplastic of Oenothera elata subsp. hookeri (Hooker's evening primrose).